The sequence spans 510 residues: Pyruvate kinase, cytosolic isozyme (510 aa).

R50 contributes to the substrate binding site. K(+) is bound by residues N52, S54, D84, and T85. 52–55 (NFSH) serves as a coordination point for ATP. Residues R91 and K176 each contribute to the ATP site. E242 contacts Mg(2+). G265, D266, and T298 together coordinate substrate. A Mg(2+)-binding site is contributed by D266.

The protein belongs to the pyruvate kinase family. Homotetramer. Requires Mg(2+) as cofactor. The cofactor is K(+).

Its subcellular location is the cytoplasm. The catalysed reaction is pyruvate + ATP = phosphoenolpyruvate + ADP + H(+). It participates in carbohydrate degradation; glycolysis; pyruvate from D-glyceraldehyde 3-phosphate: step 5/5. This chain is Pyruvate kinase, cytosolic isozyme, found in Solanum tuberosum (Potato).